The primary structure comprises 179 residues: MAIEILRLGHRGERDKRISTHVALTSRALGAEKIIFTEEDKHVKESVERIVDSWGGDFKFEVVKSWRTYAKRFKDNGIVVHLTMYGENINKIMTEIREDISKTNKNLLLIIGAEKVPREAYDLANYNLSVGNQPHSEVAALAIFLDRLTEGKTLYSEYDNAKIKVTPSKSEKCVFVEKD.

Residues leucine 82, 112-116 (GAEKV), and 130-137 (VGNQPHSE) each bind S-adenosyl-L-methionine.

Belongs to the aTrm56 family. In terms of assembly, homodimer.

It localises to the cytoplasm. The enzyme catalyses cytidine(56) in tRNA + S-adenosyl-L-methionine = 2'-O-methylcytidine(56) in tRNA + S-adenosyl-L-homocysteine + H(+). In terms of biological role, specifically catalyzes the AdoMet-dependent 2'-O-ribose methylation of cytidine at position 56 in tRNAs. This chain is tRNA (cytidine(56)-2'-O)-methyltransferase, found in Methanococcus maripaludis (strain C5 / ATCC BAA-1333).